Here is a 123-residue protein sequence, read N- to C-terminus: Small ribosomal subunit protein uS12cz/uS12cy (123 aa).

Belongs to the universal ribosomal protein uS12 family. In terms of assembly, part of the 30S ribosomal subunit.

Its subcellular location is the plastid. The protein resides in the chloroplast. Functionally, with S4 and S5 plays an important role in translational accuracy. Located at the interface of the 30S and 50S subunits. This Arabis hirsuta (Hairy rock-cress) protein is Small ribosomal subunit protein uS12cz/uS12cy (rps12-A).